The chain runs to 388 residues: Pentatricopeptide repeat-containing protein 2, mitochondrial (388 aa).

Residues 166–200 (TSFNILMDMLFIKGKYKSALQVLIEMKNQDVKFTK) form a PPR repeat. Ser382 carries the post-translational modification Phosphoserine.

Belongs to the PTCD2 family.

It localises to the mitochondrion. In terms of biological role, involved in mitochondrial RNA maturation and mitochondrial respiratory chain function. This chain is Pentatricopeptide repeat-containing protein 2, mitochondrial (PTCD2), found in Homo sapiens (Human).